A 1334-amino-acid chain; its full sequence is Aldehyde oxidase 4 (1334 aa).

In terms of domain architecture, 2Fe-2S ferredoxin-type spans 6–93 (DELIFFVNGK…GAAVTTVEGV (88 aa)). [2Fe-2S] cluster is bound by residues Cys45, Cys50, Cys53, and Cys75. Gln114 provides a ligand contact to Mo-molybdopterin. The [2Fe-2S] cluster site is built by Cys115, Cys118, Cys150, and Cys152. A Mo-molybdopterin-binding site is contributed by Cys152. The FAD-binding PCMH-type domain occupies 235–421 (FQGERTIWIM…LSVFIPYSGQ (187 aa)). Residues 263–270 (LVMGNTAV), Ala345, Thr354, His358, Asp367, and Ala411 contribute to the FAD site. Residues Ala802, 802-803 (AF), Leu1043, 1084-1087 (GSMG), Gln1199, and Leu1263 each bind Mo-molybdopterin. Glu1265 (proton acceptor; for azaheterocycle hydroxylase activity) is an active-site residue.

The protein belongs to the xanthine dehydrogenase family. Homodimer. The cofactor is [2Fe-2S] cluster. Requires FAD as cofactor. Mo-molybdopterin serves as cofactor.

It is found in the cytoplasm. The enzyme catalyses an aldehyde + O2 + H2O = a carboxylate + H2O2 + H(+). It catalyses the reaction retinal + O2 + H2O = retinoate + H2O2 + H(+). Functionally, aldehyde oxidase able to catalyze the oxidation of retinaldehyde into retinoate. Acts as a negative modulator of the epidermal trophism. May be able to oxidize a wide variety of aldehydes into their corresponding carboxylates and to hydroxylate azaheterocycles. This is Aldehyde oxidase 4 (Aox4) from Rattus norvegicus (Rat).